Here is a 208-residue protein sequence, read N- to C-terminus: Large ribosomal subunit protein uL4 (208 aa).

The disordered stretch occupies residues 54-78 (RAEVSHTTKKPWNQKGTGRARAGMS).

This sequence belongs to the universal ribosomal protein uL4 family. In terms of assembly, part of the 50S ribosomal subunit.

One of the primary rRNA binding proteins, this protein initially binds near the 5'-end of the 23S rRNA. It is important during the early stages of 50S assembly. It makes multiple contacts with different domains of the 23S rRNA in the assembled 50S subunit and ribosome. In terms of biological role, forms part of the polypeptide exit tunnel. In Methylobacillus flagellatus (strain ATCC 51484 / DSM 6875 / VKM B-1610 / KT), this protein is Large ribosomal subunit protein uL4.